Consider the following 160-residue polypeptide: MSGAVCPGSFDPVTLGHIDVFERAAAQFDEIVVAVMVNPNKSGMFTLDERIALIEESTTHLPNLRVESGQGLIVDFVRERGLTAIVKGLRTGTDFEYELQMAQMNKHVAGIDTFFVATAPSYSFVSSSLAKEVAMLGGDVTALLPAAVNTRLTAKLAERG.

Ser-9 contributes to the substrate binding site. ATP contacts are provided by residues 9–10 (SF) and His-17. 3 residues coordinate substrate: Lys-41, Ile-73, and Lys-87. ATP is bound by residues 88–90 (GLR), Glu-98, and 122–128 (YSFVSSS).

This sequence belongs to the bacterial CoaD family. As to quaternary structure, homohexamer. Requires Mg(2+) as cofactor.

Its subcellular location is the cytoplasm. The catalysed reaction is (R)-4'-phosphopantetheine + ATP + H(+) = 3'-dephospho-CoA + diphosphate. It participates in cofactor biosynthesis; coenzyme A biosynthesis; CoA from (R)-pantothenate: step 4/5. In terms of biological role, reversibly transfers an adenylyl group from ATP to 4'-phosphopantetheine, yielding dephospho-CoA (dPCoA) and pyrophosphate. The protein is Phosphopantetheine adenylyltransferase of Mycolicibacterium gilvum (strain PYR-GCK) (Mycobacterium gilvum (strain PYR-GCK)).